Consider the following 129-residue polypeptide: Ropporin-1 (129 aa).

The region spanning proline 11–alanine 34 is the RIIa domain.

This sequence belongs to the ropporin family. As to quaternary structure, homodimer. Interacts with AKAP3. May interact with SPA17. Interacts with RHPN1. Interacts with FSCB; the interaction increases upon spermatozoa capacitation conditions. Interacts with CFAP61. In terms of processing, sumoylated, sumoylation decreases upon spermatozoa capacitation conditions.

Its subcellular location is the cell projection. It is found in the cilium. The protein resides in the flagellum. In terms of biological role, important for male fertility. With ROPN1L, involved in fibrous sheath integrity and sperm motility, plays a role in PKA-dependent signaling processes required for spermatozoa capacitation. This is Ropporin-1 from Mesocricetus auratus (Golden hamster).